A 196-amino-acid chain; its full sequence is Holliday junction branch migration complex subunit RuvA (196 aa).

Residues 1 to 65 are domain I; it reads MIGYLRGKII…EDALQLFGFH (65 aa). Residues 66-140 form a domain II region; the sequence is DKEEKNLFLS…GKLVSIEEGG (75 aa). The interval 140–144 is flexible linker; it reads GVVAK. Positions 145 to 196 are domain III; sequence AKSVAHTQITSALLNLGYKSQLVDQFVSSLPADIAVEDGIRKGFQTLSGGLS.

This sequence belongs to the RuvA family. In terms of assembly, homotetramer. Forms an RuvA(8)-RuvB(12)-Holliday junction (HJ) complex. HJ DNA is sandwiched between 2 RuvA tetramers; dsDNA enters through RuvA and exits via RuvB. An RuvB hexamer assembles on each DNA strand where it exits the tetramer. Each RuvB hexamer is contacted by two RuvA subunits (via domain III) on 2 adjacent RuvB subunits; this complex drives branch migration. In the full resolvosome a probable DNA-RuvA(4)-RuvB(12)-RuvC(2) complex forms which resolves the HJ.

The protein localises to the cytoplasm. Functionally, the RuvA-RuvB-RuvC complex processes Holliday junction (HJ) DNA during genetic recombination and DNA repair, while the RuvA-RuvB complex plays an important role in the rescue of blocked DNA replication forks via replication fork reversal (RFR). RuvA specifically binds to HJ cruciform DNA, conferring on it an open structure. The RuvB hexamer acts as an ATP-dependent pump, pulling dsDNA into and through the RuvAB complex. HJ branch migration allows RuvC to scan DNA until it finds its consensus sequence, where it cleaves and resolves the cruciform DNA. This is Holliday junction branch migration complex subunit RuvA from Bdellovibrio bacteriovorus (strain ATCC 15356 / DSM 50701 / NCIMB 9529 / HD100).